Here is a 453-residue protein sequence, read N- to C-terminus: Ribulose bisphosphate carboxylase large chain (453 aa).

Positions 1-2 (MS) are excised as a propeptide. Position 3 is an N-acetylproline (Pro-3). Position 14 is an N6,N6,N6-trimethyllysine (Lys-14). Positions 123 and 173 each coordinate substrate. Residue Lys-175 is the Proton acceptor of the active site. Lys-177 contacts substrate. Residues Lys-201, Asp-203, and Glu-204 each contribute to the Mg(2+) site. Lys-201 carries the N6-carboxylysine modification. His-294 serves as the catalytic Proton acceptor. Residues Arg-295, His-327, and Ser-379 each coordinate substrate.

The protein belongs to the RuBisCO large chain family. Type I subfamily. In terms of assembly, heterohexadecamer of 8 large chains and 8 small chains; disulfide-linked. The disulfide link is formed within the large subunit homodimers. The cofactor is Mg(2+). Post-translationally, the disulfide bond which can form in the large chain dimeric partners within the hexadecamer appears to be associated with oxidative stress and protein turnover.

It is found in the plastid. It localises to the chloroplast. The enzyme catalyses 2 (2R)-3-phosphoglycerate + 2 H(+) = D-ribulose 1,5-bisphosphate + CO2 + H2O. It catalyses the reaction D-ribulose 1,5-bisphosphate + O2 = 2-phosphoglycolate + (2R)-3-phosphoglycerate + 2 H(+). Functionally, ruBisCO catalyzes two reactions: the carboxylation of D-ribulose 1,5-bisphosphate, the primary event in carbon dioxide fixation, as well as the oxidative fragmentation of the pentose substrate in the photorespiration process. Both reactions occur simultaneously and in competition at the same active site. The sequence is that of Ribulose bisphosphate carboxylase large chain from Galium parisiense (Wall bedstraw).